A 155-amino-acid polypeptide reads, in one-letter code: Protein SprT-like (155 aa).

A SprT-like domain is found at L6–M148. H67 contributes to the Zn(2+) binding site. Residue E68 is part of the active site. H71 provides a ligand contact to Zn(2+).

The protein belongs to the SprT family. Requires Zn(2+) as cofactor.

Its subcellular location is the cytoplasm. The polypeptide is Protein SprT-like (Geobacillus sp. (strain WCH70)).